Reading from the N-terminus, the 260-residue chain is tRNA (guanine-N(1)-)-methyltransferase (260 aa).

S-adenosyl-L-methionine is bound by residues Gly-117 and 137-142 (LGDFVL).

Belongs to the RNA methyltransferase TrmD family. In terms of assembly, homodimer.

It is found in the cytoplasm. It carries out the reaction guanosine(37) in tRNA + S-adenosyl-L-methionine = N(1)-methylguanosine(37) in tRNA + S-adenosyl-L-homocysteine + H(+). In terms of biological role, specifically methylates guanosine-37 in various tRNAs. This is tRNA (guanine-N(1)-)-methyltransferase from Cupriavidus necator (strain ATCC 17699 / DSM 428 / KCTC 22496 / NCIMB 10442 / H16 / Stanier 337) (Ralstonia eutropha).